Reading from the N-terminus, the 497-residue chain is NADH-quinone oxidoreductase subunit N (497 aa).

14 helical membrane-spanning segments follow: residues 14 to 34, 45 to 65, 86 to 106, 116 to 136, 137 to 157, 171 to 191, 215 to 235, 253 to 273, 281 to 301, 309 to 329, 338 to 358, 385 to 405, 420 to 439, and 461 to 481; these read LMAMLPILIVAGTVVLLMLSI, SLTVIGLNCALFSLYTVWGLF, IFYSGLVILASLATCTFAYPW, EFYLLLLISTLGALVLVSAQH, LAAVFLGIELIALPLFGLLGY, YFVLSAAASSFLLFGMAMLYA, ILAGMGMILVGFGFKLSLVPF, FLGTVGKIALLAGVMRFFLYV, LNTALSFMAVASIFFGNLMAL, LLGYSSIAHFGYLMIGLIALH, VAVYIVAYLFSSLGVLGVVSL, AAVMTIMLLSLAGIPMTLGFI, WVLTATVVIGSAIALYYYLR, and AFTAGGIVVWISALLVLVFGI.

The protein belongs to the complex I subunit 2 family. As to quaternary structure, NDH-1 is composed of 13 different subunits. Subunits NuoA, H, J, K, L, M, N constitute the membrane sector of the complex.

The protein localises to the cell membrane. The catalysed reaction is a quinone + NADH + 5 H(+)(in) = a quinol + NAD(+) + 4 H(+)(out). Its function is as follows. NDH-1 shuttles electrons from NADH, via FMN and iron-sulfur (Fe-S) centers, to quinones in the respiratory chain. The immediate electron acceptor for the enzyme in this species is believed to be ubiquinone. Couples the redox reaction to proton translocation (for every two electrons transferred, four hydrogen ions are translocated across the cytoplasmic membrane), and thus conserves the redox energy in a proton gradient. This chain is NADH-quinone oxidoreductase subunit N, found in Hamiltonella defensa subsp. Acyrthosiphon pisum (strain 5AT).